The primary structure comprises 828 residues: Glycerol-3-phosphate acyltransferase (828 aa).

The short motif at 309–314 is the HXXXXD motif element; that stretch reads CHRSHI.

Belongs to the GPAT/DAPAT family.

The protein localises to the cell inner membrane. The enzyme catalyses sn-glycerol 3-phosphate + an acyl-CoA = a 1-acyl-sn-glycero-3-phosphate + CoA. It participates in phospholipid metabolism; CDP-diacylglycerol biosynthesis; CDP-diacylglycerol from sn-glycerol 3-phosphate: step 1/3. The chain is Glycerol-3-phosphate acyltransferase from Pseudomonas putida (strain GB-1).